Consider the following 432-residue polypeptide: 3-phosphoshikimate 1-carboxyvinyltransferase (432 aa).

The 3-phosphoshikimate site is built by Lys23, Ser24, and Arg28. Lys23 contacts phosphoenolpyruvate. Residues Gly99 and Arg127 each contribute to the phosphoenolpyruvate site. Positions 172, 173, 174, 200, 317, 341, and 345 each coordinate 3-phosphoshikimate. Residue Gln174 coordinates phosphoenolpyruvate. Catalysis depends on Asp317, which acts as the Proton acceptor. Arg349, Arg391, and Lys416 together coordinate phosphoenolpyruvate.

The protein belongs to the EPSP synthase family. As to quaternary structure, monomer.

It is found in the cytoplasm. It catalyses the reaction 3-phosphoshikimate + phosphoenolpyruvate = 5-O-(1-carboxyvinyl)-3-phosphoshikimate + phosphate. The protein operates within metabolic intermediate biosynthesis; chorismate biosynthesis; chorismate from D-erythrose 4-phosphate and phosphoenolpyruvate: step 6/7. In terms of biological role, catalyzes the transfer of the enolpyruvyl moiety of phosphoenolpyruvate (PEP) to the 5-hydroxyl of shikimate-3-phosphate (S3P) to produce enolpyruvyl shikimate-3-phosphate and inorganic phosphate. The sequence is that of 3-phosphoshikimate 1-carboxyvinyltransferase from Blochmanniella pennsylvanica (strain BPEN).